The primary structure comprises 208 residues: Flavin-dependent thymidylate synthase (208 aa).

In terms of domain architecture, ThyX spans 1–208 (MEVICKHYTP…QYLFEDCLKH (208 aa)). FAD contacts are provided by residues Ser50 and 74–76 (RHR). DUMP is bound by residues 71–74 (ELSR), 84–86 (SSR), and Lys147. The short motif at 74 to 84 (RHRIASLSVKS) is the ThyX motif element. Residues 163 to 165 (NAR) and Asn169 each bind FAD. Arg174 serves as a coordination point for dUMP. Arg174 (involved in ionization of N3 of dUMP, leading to its activation) is an active-site residue.

Belongs to the thymidylate synthase ThyX family. Homotetramer. FAD serves as cofactor.

The enzyme catalyses dUMP + (6R)-5,10-methylene-5,6,7,8-tetrahydrofolate + NADPH + H(+) = dTMP + (6S)-5,6,7,8-tetrahydrofolate + NADP(+). It functions in the pathway pyrimidine metabolism; dTTP biosynthesis. In terms of biological role, catalyzes the reductive methylation of 2'-deoxyuridine-5'-monophosphate (dUMP) to 2'-deoxythymidine-5'-monophosphate (dTMP) while utilizing 5,10-methylenetetrahydrofolate (mTHF) as the methyl donor, and NADPH and FADH(2) as the reductant. This Helicobacter pylori (strain J99 / ATCC 700824) (Campylobacter pylori J99) protein is Flavin-dependent thymidylate synthase.